The following is a 62-amino-acid chain: Sperm protamine P1 (62 aa).

The disordered stretch occupies residues 1–62; the sequence is MARYRHSRSR…RYSRRRRRRY (62 aa).

This sequence belongs to the protamine P1 family. In terms of tissue distribution, testis.

Its subcellular location is the nucleus. The protein resides in the chromosome. In terms of biological role, protamines substitute for histones in the chromatin of sperm during the haploid phase of spermatogenesis. They compact sperm DNA into a highly condensed, stable and inactive complex. The sequence is that of Sperm protamine P1 (PRM1) from Lagostrophus fasciatus (Banded hare-wallaby).